The chain runs to 202 residues: Small ribosomal subunit protein uS4 (202 aa).

A disordered region spans residues 21–42; the sequence is LSRKSPRRAYPPGQHGQARRKR. The 63-residue stretch at 90 to 152 folds into the S4 RNA-binding domain; that stretch reads MRLDNTVFRL…DRSRKLVETN (63 aa).

It belongs to the universal ribosomal protein uS4 family. In terms of assembly, part of the 30S ribosomal subunit. Contacts protein S5. The interaction surface between S4 and S5 is involved in control of translational fidelity.

Functionally, one of the primary rRNA binding proteins, it binds directly to 16S rRNA where it nucleates assembly of the body of the 30S subunit. In terms of biological role, with S5 and S12 plays an important role in translational accuracy. This is Small ribosomal subunit protein uS4 from Synechocystis sp. (strain ATCC 27184 / PCC 6803 / Kazusa).